The primary structure comprises 467 residues: MPTQRWAPGTQCMTKCENSRPKPGELAFRKGDMVTILEACEDKSWYRAKHHSSGQEGLLAAAALRQREALSTDPKLSLMPWFHGKISGQEAIQQLQPPEDGLFLVRESARHPGDYVLCVSFGRDVIHYRVLHRDGHLTIDEAVCFCNLMDMVEHYTRDKGAICTKLVKPKRKQGAKSAEEELAKAGWLLDLQHLTLGAQIGEGEFGAVLQGEYLGQKVAVKNIKCDVTAQAFLDETAVMTKLQHRNLVRLLGVILHHGLYIVMEHVSKGNLVNFLRTRGRALVSTSQLLQFALHVAEGMEYLESKKLVHRDLAARNILVSEDLVAKVSDFGLAKAELRKGLDSSRLPVKWTAPEALKNGRFSSKSDVWSFGVLLWEVFSYGRAPYPKMSLKEVSEAVEKGYRMEPPDSCPGPVHTLMGSCWEAEPSRRPPFRKIVEKLGRELRSVGVAAPAGGQEAEGSAPTRSQDP.

The disordered stretch occupies residues 1 to 20 (MPTQRWAPGTQCMTKCENSR). Residues 7-69 (APGTQCMTKC…AAAALRQREA (63 aa)) enclose the SH3 domain. One can recognise an SH2 domain in the interval 81-170 (WFHGKISGQE…AICTKLVKPK (90 aa)). Positions 194–443 (LTLGAQIGEG…IVEKLGRELR (250 aa)) constitute a Protein kinase domain. ATP contacts are provided by residues 200-208 (IGEGEFGAV) and K221. D311 serves as the catalytic Proton acceptor. The interval 445–467 (VGVAAPAGGQEAEGSAPTRSQDP) is disordered.

This sequence belongs to the protein kinase superfamily. Tyr protein kinase family. CSK subfamily. Interacts with KIT. In terms of tissue distribution, enriched in lymphoid tissues.

Its subcellular location is the cytoplasm. It is found in the membrane. It carries out the reaction L-tyrosyl-[protein] + ATP = O-phospho-L-tyrosyl-[protein] + ADP + H(+). Could play a significant role in the signal transduction of hematopoietic cells. May regulate tyrosine kinase activity of SRC-family members in brain. This Rattus norvegicus (Rat) protein is Megakaryocyte-associated tyrosine-protein kinase (Matk).